Consider the following 272-residue polypeptide: Tropinone reductase-like 1 (272 aa).

17-41 (IITGGASGIGACTAELFHENGAKVV) contributes to the NAD(+) binding site. Residue serine 150 coordinates substrate. Tyrosine 163 functions as the Proton acceptor in the catalytic mechanism.

The protein belongs to the short-chain dehydrogenases/reductases (SDR) family.

Functionally, has no tropinone reductase activity. The protein is Tropinone reductase-like 1 of Erythroxylum coca (Coca plant).